Here is a 569-residue protein sequence, read N- to C-terminus: Urease subunit alpha (569 aa).

Residues 131-569 form the Urease domain; it reads GGIDTHIHFI…LPMAQRYFLL (439 aa). Ni(2+)-binding residues include histidine 136, histidine 138, and lysine 219. An N6-carboxylysine modification is found at lysine 219. Histidine 221 provides a ligand contact to substrate. Ni(2+)-binding residues include histidine 248 and histidine 274. Histidine 322 (proton donor) is an active-site residue. Ni(2+) is bound at residue aspartate 362.

The protein belongs to the metallo-dependent hydrolases superfamily. Urease alpha subunit family. In terms of assembly, heterotrimer of UreA (gamma), UreB (beta) and UreC (alpha) subunits. Three heterotrimers associate to form the active enzyme. Ni cation serves as cofactor. In terms of processing, carboxylation allows a single lysine to coordinate two nickel ions.

Its subcellular location is the cytoplasm. It carries out the reaction urea + 2 H2O + H(+) = hydrogencarbonate + 2 NH4(+). It functions in the pathway nitrogen metabolism; urea degradation; CO(2) and NH(3) from urea (urease route): step 1/1. This is Urease subunit alpha from Synechococcus sp. (strain RCC307).